The chain runs to 386 residues: Succinate--CoA ligase [ADP-forming] subunit beta (386 aa).

Residues 9–244 (KELLKQFGVT…LDEEDPAEIE (236 aa)) enclose the ATP-grasp domain. Residues lysine 46, 53 to 55 (GRG), glutamate 99, alanine 102, and glutamate 107 each bind ATP. Asparagine 199 and aspartate 213 together coordinate Mg(2+). Substrate contacts are provided by residues asparagine 264 and 321–323 (GIM).

It belongs to the succinate/malate CoA ligase beta subunit family. Heterotetramer of two alpha and two beta subunits. Mg(2+) serves as cofactor.

The catalysed reaction is succinate + ATP + CoA = succinyl-CoA + ADP + phosphate. It catalyses the reaction GTP + succinate + CoA = succinyl-CoA + GDP + phosphate. It participates in carbohydrate metabolism; tricarboxylic acid cycle; succinate from succinyl-CoA (ligase route): step 1/1. Functionally, succinyl-CoA synthetase functions in the citric acid cycle (TCA), coupling the hydrolysis of succinyl-CoA to the synthesis of either ATP or GTP and thus represents the only step of substrate-level phosphorylation in the TCA. The beta subunit provides nucleotide specificity of the enzyme and binds the substrate succinate, while the binding sites for coenzyme A and phosphate are found in the alpha subunit. The protein is Succinate--CoA ligase [ADP-forming] subunit beta of Bordetella pertussis (strain Tohama I / ATCC BAA-589 / NCTC 13251).